Here is a 126-residue protein sequence, read N- to C-terminus: MRHRYSGRRLNRTSAHRKAMFRNMAVSLIEHEMINTTLPKAKEFRRVAEPLITLAKEDSVANRRLVFSRLRDRKAVTKLFNELGPRYQARPGGYLRILKRGFRAGDNAPMAIVELLERPLPDSQEE.

Belongs to the bacterial ribosomal protein bL17 family. Part of the 50S ribosomal subunit. Contacts protein L32.

The sequence is that of Large ribosomal subunit protein bL17 from Nitrosococcus oceani (strain ATCC 19707 / BCRC 17464 / JCM 30415 / NCIMB 11848 / C-107).